The chain runs to 409 residues: DNA replication and repair protein RecF (409 aa).

Residue 30-37 (GSNGHGKT) participates in ATP binding.

The protein belongs to the RecF family.

It localises to the cytoplasm. In terms of biological role, the RecF protein is involved in DNA metabolism; it is required for DNA replication and normal SOS inducibility. RecF binds preferentially to single-stranded, linear DNA. It also seems to bind ATP. In Rhodococcus erythropolis (strain PR4 / NBRC 100887), this protein is DNA replication and repair protein RecF.